A 706-amino-acid chain; its full sequence is Choline transporter-like protein 2 (706 aa).

Residues 1–33 are Cytoplasmic-facing; sequence MGKEQQLYYGKHGTPQKYDPAFRGPIYNRGCTD. Phosphothreonine is present on T14. The chain crosses the membrane as a helical span at residues 34–54; sequence IICCVFLFLAIVGYVAVGIIA. Residues 55–232 are Extracellular-facing; it reads WTHGDPRKVI…RIFEDYTVSW (178 aa). N-linked (GlcNAc...) asparagine glycans are attached at residues N187 and N200. Residues 233–253 form a helical membrane-spanning segment; that stretch reads YWIIIGLIIAMVLSLLFIILL. At 254-256 the chain is on the cytoplasmic side; sequence RFL. A helical transmembrane segment spans residues 257–277; sequence AGIMVWVMIVMVILVLGYGIL. Residues 278–315 are Extracellular-facing; sequence HCYMEYARLRGEAGSDVSLVDLGFQTDFRVYLHLRQTW. A helical transmembrane segment spans residues 316-336; sequence VAFMIILSIVEVIIILLLIFL. Residues 337–364 are Cytoplasmic-facing; that stretch reads RKRILIAIALIKEASRAVGYVMCSLLYP. The helical transmembrane segment at 365–385 threads the bilayer; it reads LVTFFLLCLCIAYWASTAIFL. The Extracellular portion of the chain corresponds to 386–457; the sequence is STSNEAVYKI…FNVFMFFWLA (72 aa). Residues N397 and N417 are each glycosylated (N-linked (GlcNAc...) asparagine). Residues 458–480 traverse the membrane as a helical segment; the sequence is NFVLALGQVTLAGAFASYYWAMN. At 481–504 the chain is on the cytoplasmic side; it reads KPDDLPAFPLFSAFGRALRYHTGS. The helical transmembrane segment at 505-525 threads the bilayer; that stretch reads LAFGSLLLAIVQVIRVILEYL. Residues 526–563 are Extracellular-facing; sequence DQRLKAAENKFAKFLMSCLKCCFWCLEKFIKFLNRNAY. The helical transmembrane segment at 564-584 threads the bilayer; that stretch reads IMIAIYGTNFCTSARNAFFLL. Topologically, residues 585-599 are cytoplasmic; it reads MRNIIRVAVLDKVTD. The chain crosses the membrane as a helical span at residues 600 to 620; it reads FLFLLGKLLIVGSVGILAFFF. At 621–638 the chain is on the extracellular side; sequence FTHRIRIVQDTAPSLNYY. A helical membrane pass occupies residues 639–659; the sequence is WVPVVTVVIGSYLIAHGFFSV. The Cytoplasmic portion of the chain corresponds to 660–706; sequence YGMCVDTLFLCFLEDLERNDGTPERPYFMSLTLKKILNKTNKRQAEA.

Belongs to the CTL (choline transporter-like) family. In terms of assembly, interacts with COCH. N-glycosylated.

The protein localises to the cell membrane. It is found in the mitochondrion outer membrane. The enzyme catalyses choline(out) + n H(+)(in) = choline(in) + n H(+)(out). It catalyses the reaction ethanolamine(out) + n H(+)(in) = ethanolamine(in) + n H(+)(out). Functionally, choline/H+ antiporter, mainly in mitochodria. Also acts as a low-affinity ethanolamine/H+ antiporter, regulating the supply of extracellular ethanolamine (Etn) for the CDP-Etn pathway, redistribute intracellular Etn and balance the CDP-Cho and CDP-Etn arms of the Kennedy pathway. The protein is Choline transporter-like protein 2 (SLC44A2) of Bos taurus (Bovine).